The following is an 854-amino-acid chain: Glucans biosynthesis glucosyltransferase H (854 aa).

7 consecutive transmembrane segments (helical) span residues 155-175 (ILLV…KTIL), 209-229 (ILVL…TALM), 528-548 (VFLT…FLML), 583-603 (IALF…SVIL), 619-639 (FISL…RMLF), 671-691 (FVRH…MAWL), and 695-715 (FLWW…VSVY).

Belongs to the glycosyltransferase 2 family. OpgH subfamily.

Its subcellular location is the cell inner membrane. The protein operates within glycan metabolism; osmoregulated periplasmic glucan (OPG) biosynthesis. In terms of biological role, involved in the biosynthesis of osmoregulated periplasmic glucans (OPGs). This is Glucans biosynthesis glucosyltransferase H from Pectobacterium carotovorum subsp. carotovorum (strain PC1).